A 292-amino-acid chain; its full sequence is Galactinol synthase 2 (292 aa).

Residue K65 is part of the active site. 3 residues coordinate Mn(2+): D81, D83, and H218.

This sequence belongs to the glycosyltransferase 8 family. Galactosyltransferase subfamily. It depends on a divalent metal cation as a cofactor. Present in phloem-associated intermediary cells. Weakly expressed in leaves.

The protein resides in the cytoplasm. The catalysed reaction is myo-inositol + UDP-alpha-D-galactose = alpha-D-galactosyl-(1-&gt;3)-1D-myo-inositol + UDP + H(+). May promote plant stress tolerance. Galactinol synthase mainly involved in the biosynthesis of transport raffinose family oligosaccharides (RFOs) that function as osmoprotectants. The sequence is that of Galactinol synthase 2 (GOLS2) from Ajuga reptans (Bugle).